Consider the following 240-residue polypeptide: MADVKYKRIMLKLSGEALAGDKGFGINPPVIKTVAEEVKDVYNLGIQIAIVVGGGNMWRGEAGAQMGMERAQADYIGMLATIMNALALQDNLESIGVPTRVQTSIEMRQIAEPYIRRKAIRHLEKERVVIFAGGTGSPYFSTDTTAALRAAEINADAILMAKNGVDGIYSADPKKDPAAVKFDQLTQLDIINKGLNVMDTTASSLSMDNDIPFVVFNLNESGNIRKVVEGENIGTTVRGK.

Position 12–15 (12–15 (KLSG)) interacts with ATP. The interval 20–25 (GDKGFG) is involved in allosteric activation by GTP. Residue Gly54 participates in UMP binding. ATP-binding residues include Gly55 and Arg59. Residues Asp74 and 135–142 (TGSPYFST) contribute to the UMP site. Residues Asn163, Tyr169, and Asp172 each contribute to the ATP site.

Belongs to the UMP kinase family. In terms of assembly, homohexamer.

The protein localises to the cytoplasm. The catalysed reaction is UMP + ATP = UDP + ADP. It participates in pyrimidine metabolism; CTP biosynthesis via de novo pathway; UDP from UMP (UMPK route): step 1/1. Allosterically activated by GTP. Inhibited by UTP. In terms of biological role, catalyzes the reversible phosphorylation of UMP to UDP. The protein is Uridylate kinase of Levilactobacillus brevis (strain ATCC 367 / BCRC 12310 / CIP 105137 / JCM 1170 / LMG 11437 / NCIMB 947 / NCTC 947) (Lactobacillus brevis).